A 373-amino-acid chain; its full sequence is Homoserine O-acetyltransferase (373 aa).

In terms of domain architecture, AB hydrolase-1 spans 46-355; sequence NAILICHPLT…NPNGHDSFLL (310 aa). The Nucleophile role is filled by serine 151. Arginine 221 contributes to the substrate binding site. Catalysis depends on residues aspartate 317 and histidine 350. Aspartate 351 serves as a coordination point for substrate.

Belongs to the AB hydrolase superfamily. MetX family. Homodimer.

Its subcellular location is the cytoplasm. It catalyses the reaction L-homoserine + acetyl-CoA = O-acetyl-L-homoserine + CoA. The protein operates within amino-acid biosynthesis; L-methionine biosynthesis via de novo pathway; O-acetyl-L-homoserine from L-homoserine: step 1/1. Its function is as follows. Transfers an acetyl group from acetyl-CoA to L-homoserine, forming acetyl-L-homoserine. This is Homoserine O-acetyltransferase from Zymomonas mobilis subsp. mobilis (strain ATCC 31821 / ZM4 / CP4).